Here is a 202-residue protein sequence, read N- to C-terminus: ATP synthase subunit b (202 aa).

Residues 9–29 (TTLSLCLAVCVVVIAVGTGWA) traverse the membrane as a helical segment.

This sequence belongs to the ATPase B chain family. F-type ATPases have 2 components, F(1) - the catalytic core - and F(0) - the membrane proton channel. F(1) has five subunits: alpha(3), beta(3), gamma(1), delta(1), epsilon(1). F(0) has three main subunits: a(1), b(2) and c(10-14). The alpha and beta chains form an alternating ring which encloses part of the gamma chain. F(1) is attached to F(0) by a central stalk formed by the gamma and epsilon chains, while a peripheral stalk is formed by the delta and b chains.

The protein resides in the cell inner membrane. Functionally, f(1)F(0) ATP synthase produces ATP from ADP in the presence of a proton or sodium gradient. F-type ATPases consist of two structural domains, F(1) containing the extramembraneous catalytic core and F(0) containing the membrane proton channel, linked together by a central stalk and a peripheral stalk. During catalysis, ATP synthesis in the catalytic domain of F(1) is coupled via a rotary mechanism of the central stalk subunits to proton translocation. Its function is as follows. Component of the F(0) channel, it forms part of the peripheral stalk, linking F(1) to F(0). The chain is ATP synthase subunit b from Pelobacter propionicus (strain DSM 2379 / NBRC 103807 / OttBd1).